The sequence spans 468 residues: Hexokinase (468 aa).

The 457-residue stretch at 10-466 folds into the Hexokinase domain; the sequence is AKQLAELEVV…SGKGAALIAD (457 aa). The tract at residues 74–225 is hexokinase small subdomain; it reads TGAEVGEAYA…NVPAVCKAIV (152 aa). 85 to 90 contributes to the ATP binding site; sequence DFGGST. Positions 163 to 189 are glucose-binding; sequence PVGFTFSFPCAQAALNSSFLIEWTKGF. The hexokinase large subdomain stretch occupies residues 226-455; sequence NDTVGTLVSC…KNIHYCIADD (230 aa).

This sequence belongs to the hexokinase family.

The catalysed reaction is a D-hexose + ATP = a D-hexose 6-phosphate + ADP + H(+). The enzyme catalyses D-mannose + ATP = D-mannose 6-phosphate + ADP + H(+). It carries out the reaction D-fructose + ATP = D-fructose 6-phosphate + ADP + H(+). It catalyses the reaction D-glucose + ATP = D-glucose 6-phosphate + ADP + H(+). It functions in the pathway carbohydrate metabolism; hexose metabolism. Its pathway is carbohydrate degradation; glycolysis; D-glyceraldehyde 3-phosphate and glycerone phosphate from D-glucose: step 1/4. Functionally, catalyzes the phosphorylation of various hexoses to hexose 6-phosphate. This is Hexokinase (HXK) from Toxoplasma gondii.